Here is a 124-residue protein sequence, read N- to C-terminus: Small ribosomal subunit protein uS13 (124 aa).

Residues 94–124 (GLPLRGQRTKNNSRTRKGKRKTVANKKKATK) are disordered. Positions 100–124 (QRTKNNSRTRKGKRKTVANKKKATK) are enriched in basic residues.

Belongs to the universal ribosomal protein uS13 family. Part of the 30S ribosomal subunit. Forms a loose heterodimer with protein S19. Forms two bridges to the 50S subunit in the 70S ribosome.

Located at the top of the head of the 30S subunit, it contacts several helices of the 16S rRNA. In the 70S ribosome it contacts the 23S rRNA (bridge B1a) and protein L5 of the 50S subunit (bridge B1b), connecting the 2 subunits; these bridges are implicated in subunit movement. Contacts the tRNAs in the A and P-sites. This chain is Small ribosomal subunit protein uS13, found in Flavobacterium johnsoniae (strain ATCC 17061 / DSM 2064 / JCM 8514 / BCRC 14874 / CCUG 350202 / NBRC 14942 / NCIMB 11054 / UW101) (Cytophaga johnsonae).